The chain runs to 83 residues: Sulfur carrier protein TusA (83 aa).

Cysteine 20 acts as the Cysteine persulfide intermediate in catalysis.

It belongs to the sulfur carrier protein TusA family.

Its subcellular location is the cytoplasm. Functionally, sulfur carrier protein which probably makes part of a sulfur-relay system. The chain is Sulfur carrier protein TusA from Pseudoalteromonas atlantica (strain T6c / ATCC BAA-1087).